The following is an 875-amino-acid chain: Serine/threonine-protein kinase D2 (875 aa).

The tract at residues 1-33 (MAAAPSHPAGLPCSPGPGSPPPPGGSDLQSLPP) is disordered. The segment covering 14–24 (SPGPGSPPPPG) has biased composition (pro residues). Phosphoserine is present on residues serine 26 and serine 30. Tyrosine 87 is modified (phosphotyrosine). A Phorbol-ester/DAG-type 1 zinc finger spans residues 138–188 (PHALTVHSYRAPAFCDHCGEMLFGLVRQGLKCDGCGLNYHKRCAFSIPNNC). 8 positions are modified to phosphoserine: serine 197, serine 198, serine 200, serine 203, serine 206, serine 211, serine 212, and serine 214. The segment at 224–247 (RSTTDLLPRRPPSSSSSSSSSSFY) is disordered. Low complexity predominate over residues 236 to 245 (SSSSSSSSSS). Serine 244 carries the post-translational modification Phosphoserine; by CSNK1D and CSNK1E. Serine 245 bears the Phosphoserine mark. Residues 265-315 (PHTFLIHSYTRPTVCQACKKLLKGLFRQGLQCKDCKFNCHKRCATRVPNDC) form a Phorbol-ester/DAG-type 2 zinc finger. The PH domain maps to 398 to 510 (TTLREGWVVH…WETAIRQALM (113 aa)). Tyrosine 408 is subject to Phosphotyrosine. Residue tyrosine 439 is modified to Phosphotyrosine; by ABL1. The residue at position 519 (serine 519) is a Phosphoserine. In terms of domain architecture, Protein kinase spans 552–808 (IFPDEVLGSG…VDKSLSHPWL (257 aa)). Residues 558-566 (LGSGQFGVV) and lysine 581 each bind ATP. Residue aspartate 675 is the Proton acceptor of the active site. Residue serine 707 is modified to Phosphoserine; by PKC. Serine 711 is modified (phosphoserine). Phosphotyrosine; by ABL1 is present on tyrosine 718. The Important for ABL1-mediated Tyr-718 phosphorylation motif lies at 725–727 (LNQ). Serine 873 carries the phosphoserine; by autocatalysis modification.

Belongs to the protein kinase superfamily. CAMK Ser/Thr protein kinase family. PKD subfamily. Interacts (via C-terminus) with LCK. Interacts (via N-terminus and zing-finger domain 1 and 2) with PRKCD in response to oxidative stress; the interaction is independent of PRKD2 tyrosine phosphorylation. The cofactor is Mg(2+). In terms of processing, phosphorylation of Ser-873 correlates with the activation status of the kinase. Ser-707 is probably phosphorylated by PKC. Phosphorylation at Ser-244 by CSNK1D and CSNK1E promotes nuclear localization and substrate targeting. Phosphorylation at Ser-244, Ser-707 and Ser-711 is required for nuclear localization. Phosphorylated at Tyr-438 by ABL1 in response to oxidative stress. Phosphorylated at Tyr-718 by ABL1 specifically in response to oxidative stress; requires prior phosphorylation at Ser-707 or/and Ser-711.

The protein resides in the cytoplasm. It localises to the cell membrane. Its subcellular location is the golgi apparatus. It is found in the trans-Golgi network. The catalysed reaction is L-seryl-[protein] + ATP = O-phospho-L-seryl-[protein] + ADP + H(+). It catalyses the reaction L-threonyl-[protein] + ATP = O-phospho-L-threonyl-[protein] + ADP + H(+). With respect to regulation, activated by DAG and phorbol esters. Phorbol-ester/DAG-type domains bind DAG, mediating translocation to membranes. Autophosphorylation of Ser-711 and phosphorylation of Ser-707 by PKC relieves auto-inhibition by the PH domain. Catalytic activity is further increased by phosphorylation at Tyr-718 in response to oxidative stress. Serine/threonine-protein kinase that converts transient diacylglycerol (DAG) signals into prolonged physiological effects downstream of PKC, and is involved in the regulation of cell proliferation via MAPK1/3 (ERK1/2) signaling, oxidative stress-induced NF-kappa-B activation, inhibition of HDAC7 transcriptional repression, signaling downstream of T-cell antigen receptor (TCR) and cytokine production, and plays a role in Golgi membrane trafficking, angiogenesis, secretory granule release and cell adhesion. May potentiate mitogenesis induced by the neuropeptide bombesin by mediating an increase in the duration of MAPK1/3 (ERK1/2) signaling, which leads to accumulation of immediate-early gene products including FOS that stimulate cell cycle progression. In response to oxidative stress, is phosphorylated at Tyr-438 and Tyr-718 by ABL1, which leads to the activation of PRKD2 without increasing its catalytic activity, and mediates activation of NF-kappa-B. In response to the activation of the gastrin receptor CCKBR, is phosphorylated at Ser-244 by CSNK1D and CSNK1E, translocates to the nucleus, phosphorylates HDAC7, leading to nuclear export of HDAC7 and inhibition of HDAC7 transcriptional repression of NR4A1/NUR77. Upon TCR stimulation, is activated independently of ZAP70, translocates from the cytoplasm to the nucleus and is required for interleukin-2 (IL2) promoter up-regulation. During adaptive immune responses, is required in peripheral T-lymphocytes for the production of the effector cytokines IL2 and IFNG after TCR engagement and for optimal induction of antibody responses to antigens. In epithelial cells stimulated with lysophosphatidic acid (LPA), is activated through a PKC-dependent pathway and mediates LPA-stimulated interleukin-8 (IL8) secretion via a NF-kappa-B-dependent pathway. During TCR-induced T-cell activation, interacts with and is activated by the tyrosine kinase LCK, which results in the activation of the NFAT transcription factors. In the trans-Golgi network (TGN), regulates the fission of transport vesicles that are on their way to the plasma membrane and in polarized cells is involved in the transport of proteins from the TGN to the basolateral membrane. Plays an important role in endothelial cell proliferation and migration prior to angiogenesis, partly through modulation of the expression of KDR/VEGFR2 and FGFR1, two key growth factor receptors involved in angiogenesis. In secretory pathway, is required for the release of chromogranin-A (CHGA)-containing secretory granules from the TGN. Downstream of PRKCA, plays important roles in angiotensin-2-induced monocyte adhesion to endothelial cells. The polypeptide is Serine/threonine-protein kinase D2 (Prkd2) (Rattus norvegicus (Rat)).